Consider the following 173-residue polypeptide: Bifunctional protein PyrR (173 aa).

Residues 93–105 carry the PRPP-binding motif; sequence IILVDDVLYTGRT.

The protein belongs to the purine/pyrimidine phosphoribosyltransferase family. PyrR subfamily. Homodimer and homohexamer; in equilibrium.

It carries out the reaction UMP + diphosphate = 5-phospho-alpha-D-ribose 1-diphosphate + uracil. Functionally, regulates transcriptional attenuation of the pyrimidine nucleotide (pyr) operon by binding in a uridine-dependent manner to specific sites on pyr mRNA. This disrupts an antiterminator hairpin in the RNA and favors formation of a downstream transcription terminator, leading to a reduced expression of downstream genes. Also displays a weak uracil phosphoribosyltransferase activity which is not physiologically significant. This chain is Bifunctional protein PyrR, found in Streptococcus equi subsp. zooepidemicus (strain H70).